A 246-amino-acid polypeptide reads, in one-letter code: Acetoacetyl-CoA reductase (246 aa).

NADP(+) contacts are provided by residues 13–15, Gly-35, Arg-40, 60–62, and 88–92; these read GGI, GNV, and NAGIT. Substrate contacts are provided by residues Asp-94 and 147-150; that span reads QFGQ. The active-site Proton acceptor is Tyr-153. 183–186 provides a ligand contact to NADP(+); sequence PGYI. Substrate is bound by residues 184–185 and Arg-195; that span reads GY.

It belongs to the short-chain dehydrogenases/reductases (SDR) family. Homotetramer.

It is found in the cytoplasm. The enzyme catalyses a (3R)-3-hydroxyacyl-CoA + NADP(+) = a 3-oxoacyl-CoA + NADPH + H(+). It carries out the reaction (3R)-3-hydroxybutanoyl-CoA + NADP(+) = acetoacetyl-CoA + NADPH + H(+). It participates in biopolymer metabolism; poly-(R)-3-hydroxybutanoate biosynthesis. Functionally, catalyzes the chiral reduction of acetoacetyl-CoA to (R)-3-hydroxybutyryl-CoA. Is involved in the biosynthesis of polyhydroxybutyrate (PHB), which is accumulated as an intracellular energy reserve material when cells grow under conditions of nutrient limitation. The polypeptide is Acetoacetyl-CoA reductase (Cupriavidus necator (strain ATCC 17699 / DSM 428 / KCTC 22496 / NCIMB 10442 / H16 / Stanier 337) (Ralstonia eutropha)).